A 239-amino-acid chain; its full sequence is Isopentenyl-diphosphate Delta-isomerase (239 aa).

Position 43 (lysine 43) interacts with substrate. Mg(2+)-binding residues include histidine 47 and histidine 58. Positions 56 to 210 (LLHRAFSIFL…KVKVTPWFRL (155 aa)) constitute a Nudix hydrolase domain. The substrate site is built by arginine 77 and lysine 81. Cysteine 93 is an active-site residue. Serine 94 is a substrate binding site. 2 residues coordinate Mg(2+): glutamate 156 and glutamate 158. Residue glutamate 158 is part of the active site.

It belongs to the IPP isomerase type 1 family. The cofactor is Mg(2+).

It carries out the reaction isopentenyl diphosphate = dimethylallyl diphosphate. It functions in the pathway isoprenoid biosynthesis; dimethylallyl diphosphate biosynthesis; dimethylallyl diphosphate from isopentenyl diphosphate: step 1/1. In terms of biological role, catalyzes the 1,3-allylic rearrangement of the homoallylic substrate isopentenyl (IPP) to its highly electrophilic allylic isomer, dimethylallyl diphosphate (DMAPP). The protein is Isopentenyl-diphosphate Delta-isomerase (ipi) of Dictyostelium discoideum (Social amoeba).